Consider the following 156-residue polypeptide: Small ribosomal subunit protein uS7 (156 aa).

The protein belongs to the universal ribosomal protein uS7 family. As to quaternary structure, part of the 30S ribosomal subunit. Contacts proteins S9 and S11.

Its function is as follows. One of the primary rRNA binding proteins, it binds directly to 16S rRNA where it nucleates assembly of the head domain of the 30S subunit. Is located at the subunit interface close to the decoding center, probably blocks exit of the E-site tRNA. The sequence is that of Small ribosomal subunit protein uS7 from Campylobacter concisus (strain 13826).